The following is a 231-amino-acid chain: uncharacterized protein (231 aa).

10-34 lines the NADP(+) pocket; that stretch reads VVTGAGSGIGEAIATLLHEEGAKVV. A substrate-binding site is contributed by Ser-140. Tyr-153 acts as the Proton acceptor in catalysis.

This sequence belongs to the short-chain dehydrogenases/reductases (SDR) family.

This is an uncharacterized protein from Staphylococcus aureus (strain COL).